We begin with the raw amino-acid sequence, 642 residues long: 1-deoxy-D-xylulose-5-phosphate synthase 2 (642 aa).

Residues His73 and 113–115 (SHA) contribute to the thiamine diphosphate site. A Mg(2+)-binding site is contributed by Asp144. Thiamine diphosphate contacts are provided by residues 145–146 (GA), Asn174, Tyr285, and Glu366. Mg(2+) is bound at residue Asn174.

The protein belongs to the transketolase family. DXPS subfamily. Homodimer. Mg(2+) is required as a cofactor. It depends on thiamine diphosphate as a cofactor.

It carries out the reaction D-glyceraldehyde 3-phosphate + pyruvate + H(+) = 1-deoxy-D-xylulose 5-phosphate + CO2. It functions in the pathway metabolic intermediate biosynthesis; 1-deoxy-D-xylulose 5-phosphate biosynthesis; 1-deoxy-D-xylulose 5-phosphate from D-glyceraldehyde 3-phosphate and pyruvate: step 1/1. Functionally, catalyzes the acyloin condensation reaction between C atoms 2 and 3 of pyruvate and glyceraldehyde 3-phosphate to yield 1-deoxy-D-xylulose-5-phosphate (DXP). The sequence is that of 1-deoxy-D-xylulose-5-phosphate synthase 2 from Streptomyces coelicolor (strain ATCC BAA-471 / A3(2) / M145).